The following is a 248-amino-acid chain: Conoporin-Cn1 (248 aa).

An N-terminal signal peptide occupies residues 1–23 (MGVQFPALKTMVTVFLLLMGNMS). Residues 45 to 64 (TPGSSLYGVALKDLADTSYN) are N-terminal region. Residues Gly120, Ser138, Pro140, Tyr167, and Tyr171 each contribute to the phosphocholine site.

Belongs to the actinoporin family. Conoidea subfamily. As to quaternary structure, octamer or nonamer in membranes. Monomer in the soluble state. In terms of processing, 9 isoforms are detected in the injectable venom, mainly corresponding to different oxidative states. As to expression, expressed by the venom duct.

It localises to the secreted. The protein resides in the nematocyst. It is found in the target cell membrane. Pore-forming protein that forms pores of around 1 nm and causes cardiac stimulation and cytolysis. The sequence is that of Conoporin-Cn1 from Conus consors (Singed cone).